The sequence spans 569 residues: Proline--tRNA ligase (569 aa).

Belongs to the class-II aminoacyl-tRNA synthetase family. ProS type 1 subfamily. In terms of assembly, homodimer.

It localises to the cytoplasm. It carries out the reaction tRNA(Pro) + L-proline + ATP = L-prolyl-tRNA(Pro) + AMP + diphosphate. Functionally, catalyzes the attachment of proline to tRNA(Pro) in a two-step reaction: proline is first activated by ATP to form Pro-AMP and then transferred to the acceptor end of tRNA(Pro). As ProRS can inadvertently accommodate and process non-cognate amino acids such as alanine and cysteine, to avoid such errors it has two additional distinct editing activities against alanine. One activity is designated as 'pretransfer' editing and involves the tRNA(Pro)-independent hydrolysis of activated Ala-AMP. The other activity is designated 'posttransfer' editing and involves deacylation of mischarged Ala-tRNA(Pro). The misacylated Cys-tRNA(Pro) is not edited by ProRS. The sequence is that of Proline--tRNA ligase from Dehalococcoides mccartyi (strain ATCC BAA-2266 / KCTC 15142 / 195) (Dehalococcoides ethenogenes (strain 195)).